A 427-amino-acid chain; its full sequence is Arginine biosynthesis bifunctional protein ArgJ (427 aa).

Threonine 174, lysine 200, threonine 211, glutamate 291, asparagine 422, and threonine 427 together coordinate substrate. Threonine 211 (nucleophile) is an active-site residue.

The protein belongs to the ArgJ family. In terms of assembly, heterotetramer of two alpha and two beta chains.

It localises to the cytoplasm. It carries out the reaction N(2)-acetyl-L-ornithine + L-glutamate = N-acetyl-L-glutamate + L-ornithine. It catalyses the reaction L-glutamate + acetyl-CoA = N-acetyl-L-glutamate + CoA + H(+). It functions in the pathway amino-acid biosynthesis; L-arginine biosynthesis; L-ornithine and N-acetyl-L-glutamate from L-glutamate and N(2)-acetyl-L-ornithine (cyclic): step 1/1. Its pathway is amino-acid biosynthesis; L-arginine biosynthesis; N(2)-acetyl-L-ornithine from L-glutamate: step 1/4. In terms of biological role, catalyzes two activities which are involved in the cyclic version of arginine biosynthesis: the synthesis of N-acetylglutamate from glutamate and acetyl-CoA as the acetyl donor, and of ornithine by transacetylation between N(2)-acetylornithine and glutamate. This Prochlorococcus marinus (strain MIT 9313) protein is Arginine biosynthesis bifunctional protein ArgJ.